The sequence spans 695 residues: MAREFSLEKTRNIGIMAHIDAGKTTTTERILFYTGRIHKIGETHEGASQMDWMEQEQERGITITSAATTAQWKGYRVNIIDTPGHVDFTVEVERSLRVLDGAVAVLDAQSGVEPQTETVWRQATTYGVPRVVFVNKMDKIGADFLYSVGTLHERLAANAHPIQLPIGAEDTFEGIIDLIEMNALYYEDDLGNDPHIKEIPADLKDLADEYRGKLVEAVAELDEELMMKYLEGEEITKEELKAGIRKGTLNVEFYPVVCGTAFKNKGVQPMLDAVLDYLPAPTDVPAINGVLPDGEEAARHADDSEPFSSLAFKVMTDPYVGRLTFFRVYSGTLNSGSYVQNSTKGKRERVGRILQMHANHREEISIVYAGDIAAAVGLKDTTTGDTLCDEKEQIILESMEFPEPVIQVAIEPKSKADQDKMGQALAKLAEEDPTFRAETDQETGQTLISGMGELHLDILVDRMRREFRVEANVGDPQVSYRETFRKSAQVEGKFVRQSGGRGQYGHVWIEFGPNEEGKGFEFENAIVGGVVPREYIPAVQAGLEGALDNGVLAGYPLIDIKAKLYDGSYHDVDSNEMAFKVAASMALRNAAKKCDPVILEPMMAVEVVIPEEYLGDIMGNITSRRGRVDGMEARGNAQVVRAFVPLANMFGYATHLRSGTQGRGVYTMQFDHYEEVPKSIAEEIIKANGGNNKED.

Positions 8–282 (EKTRNIGIMA…AVLDYLPAPT (275 aa)) constitute a tr-type G domain. GTP is bound by residues 17-24 (AHIDAGKT), 81-85 (DTPGH), and 135-138 (NKMD).

This sequence belongs to the TRAFAC class translation factor GTPase superfamily. Classic translation factor GTPase family. EF-G/EF-2 subfamily.

It localises to the cytoplasm. Catalyzes the GTP-dependent ribosomal translocation step during translation elongation. During this step, the ribosome changes from the pre-translocational (PRE) to the post-translocational (POST) state as the newly formed A-site-bound peptidyl-tRNA and P-site-bound deacylated tRNA move to the P and E sites, respectively. Catalyzes the coordinated movement of the two tRNA molecules, the mRNA and conformational changes in the ribosome. This is Elongation factor G from Listeria monocytogenes serotype 4b (strain CLIP80459).